We begin with the raw amino-acid sequence, 224 residues long: Ribonuclease 3 (224 aa).

The 124-residue stretch at 4-127 (IEKLERSLTY…IIGAIHLEAG (124 aa)) folds into the RNase III domain. Glutamate 40 is a binding site for Mg(2+). Aspartate 44 is an active-site residue. Aspartate 113 and glutamate 116 together coordinate Mg(2+). The active site involves glutamate 116. The DRBM domain maps to 154–223 (DYKTKLQEIT…AKIALEKLGA (70 aa)).

It belongs to the ribonuclease III family. In terms of assembly, homodimer. Requires Mg(2+) as cofactor.

The protein resides in the cytoplasm. It catalyses the reaction Endonucleolytic cleavage to 5'-phosphomonoester.. Functionally, digests double-stranded RNA. Involved in the processing of primary rRNA transcript to yield the immediate precursors to the large and small rRNAs (23S and 16S). Processes some mRNAs, and tRNAs when they are encoded in the rRNA operon. Processes pre-crRNA and tracrRNA of type II CRISPR loci if present in the organism. The polypeptide is Ribonuclease 3 (Campylobacter jejuni (strain RM1221)).